Here is a 223-residue protein sequence, read N- to C-terminus: Deoxyribose-phosphate aldolase (223 aa).

Catalysis depends on aspartate 91, which acts as the Proton donor/acceptor. The active-site Schiff-base intermediate with acetaldehyde is the lysine 154. The active-site Proton donor/acceptor is the lysine 183.

The protein belongs to the DeoC/FbaB aldolase family. DeoC type 1 subfamily.

It localises to the cytoplasm. The enzyme catalyses 2-deoxy-D-ribose 5-phosphate = D-glyceraldehyde 3-phosphate + acetaldehyde. It participates in carbohydrate degradation; 2-deoxy-D-ribose 1-phosphate degradation; D-glyceraldehyde 3-phosphate and acetaldehyde from 2-deoxy-alpha-D-ribose 1-phosphate: step 2/2. In terms of biological role, catalyzes a reversible aldol reaction between acetaldehyde and D-glyceraldehyde 3-phosphate to generate 2-deoxy-D-ribose 5-phosphate. In Geobacillus sp. (strain WCH70), this protein is Deoxyribose-phosphate aldolase.